A 428-amino-acid polypeptide reads, in one-letter code: RNA-binding protein 34 (428 aa).

2 disordered regions span residues 1–106 (MALR…KVKV) and 127–152 (DLEEIRQDQGQGRRRSQSRGKVTDGE). The residue at position 147 (K147) is an N6-acetyllysine. 2 consecutive RRM domains span residues 183–278 (RTVF…LASE) and 285–362 (RSVF…RSVN). Residue K240 forms a Glycyl lysine isopeptide (Lys-Gly) (interchain with G-Cter in SUMO2) linkage. S286 carries the phosphoserine modification. The disordered stretch occupies residues 361 to 428 (VNKEKLKQQN…GQTKKPRKQK (68 aa)). Positions 408 to 428 (LMKKKKGQKKKGQTKKPRKQK) are enriched in basic residues.

The protein belongs to the RRM RBM34 family.

The protein localises to the nucleus. Its subcellular location is the nucleolus. The polypeptide is RNA-binding protein 34 (Rbm34) (Rattus norvegicus (Rat)).